We begin with the raw amino-acid sequence, 650 residues long: Threonine--tRNA ligase (650 aa).

A TGS domain is found at 3 to 65 (DLVKVTLPDG…ERDARLEIVT (63 aa)). A catalytic region spans residues 248–548 (DHRRLGPQLG…LVEHYAGAFP (301 aa)). Residues C349, H400, and H525 each contribute to the Zn(2+) site.

It belongs to the class-II aminoacyl-tRNA synthetase family. In terms of assembly, homodimer. Zn(2+) serves as cofactor.

Its subcellular location is the cytoplasm. It catalyses the reaction tRNA(Thr) + L-threonine + ATP = L-threonyl-tRNA(Thr) + AMP + diphosphate + H(+). Functionally, catalyzes the attachment of threonine to tRNA(Thr) in a two-step reaction: L-threonine is first activated by ATP to form Thr-AMP and then transferred to the acceptor end of tRNA(Thr). Also edits incorrectly charged L-seryl-tRNA(Thr). The chain is Threonine--tRNA ligase from Anaeromyxobacter dehalogenans (strain 2CP-1 / ATCC BAA-258).